Here is a 607-residue protein sequence, read N- to C-terminus: MRGAARLGRPGRSCLPGARGLRAPPPPPLLLLLALLPLLPAPGAAAAPAPRPPELQSASAGPSVSLYLSEDEVRRLIGLDAELYYVRNDLISHYALSFSLLVPSETNFLHFTWHAKSKVEYKLGFQVDNVLAMDMPQVNISVQGEVPRTLSVFRVELSCTGKVDSEVMILMQLNLTVNSSKNFTVLNFKRRKMCYKKLEEVKTSALDKNTSRTIYDPVHAAPTTSTRVFYISVGVCCAVIFLVAIILAVLHLHSMKRIELDDSISASSSSQGLSQPSTQTTQYLRADTPNNATPITSYPTLRIEKNDLRSVTLLEAKGKVKDIAISRERITLKDVLQEGTFGRIFHGILIDEKDPNKEKQAFVKTVKDQASEIQVTMMLTESCKLRGLHHRNLLPITHVCIEEGEKPMVILPYMNWGNLKLFLRQCKLVEANNPQAISQQDLVHMAIQIACGMSYLARREVIHKDLAARNCVIDDTLQVKITDNALSRDLFPMDYHCLGDNENRPVRWMALESLVNNEFSSASDVWAFGVTLWELMTLGQTPYVDIDPFEMAAYLKDGYRIAQPINCPDELFAVMACCWALDPEERPKFQQLVQCLTEFHAALGAYV.

The tract at residues 1 to 20 (MRGAARLGRPGRSCLPGARG) is disordered. The signal sequence occupies residues 1–25 (MRGAARLGRPGRSCLPGARGLRAPP). The Extracellular segment spans residues 26-227 (PPPLLLLLAL…VHAAPTTSTR (202 aa)). A WIF domain is found at 66-194 (LYLSEDEVRR…VLNFKRRKMC (129 aa)). N-linked (GlcNAc...) asparagine glycosylation is found at N139, N174, N178, N182, and N209. C159 and C194 are joined by a disulfide. The helical transmembrane segment at 228 to 248 (VFYISVGVCCAVIFLVAIILA) threads the bilayer. The Cytoplasmic portion of the chain corresponds to 249–607 (VLHLHSMKRI…EFHAALGAYV (359 aa)). Low complexity predominate over residues 266-282 (ASSSSQGLSQPSTQTTQ). Residues 266–290 (ASSSSQGLSQPSTQTTQYLRADTPN) are disordered. A Protein kinase domain is found at 330–603 (ITLKDVLQEG…QCLTEFHAAL (274 aa)). Residues 336–344 (LQEGTFGRI) and K364 contribute to the ATP site. The active-site Proton acceptor is D465. At Y495 the chain carries Phosphotyrosine; by autocatalysis.

Belongs to the protein kinase superfamily. Tyr protein kinase family. As to quaternary structure, interacts with DVL1 (via PDZ domain). Post-translationally, proteolytically cleaved, in part by presenilin, in response to WNT3 stimulation. Cleavage occurs during neuronal differentiation. In terms of tissue distribution, observed in all the tissues examined.

Its subcellular location is the membrane. The protein resides in the nucleus. It localises to the cytoplasm. The catalysed reaction is L-tyrosyl-[protein] + ATP = O-phospho-L-tyrosyl-[protein] + ADP + H(+). In terms of biological role, may be a coreceptor along with FZD8 of Wnt proteins, such as WNT1, WNT3, WNT3A and WNT5A. Involved in neuron differentiation, axon guidance, corpus callosum establishment and neurite outgrowth. In response to WNT3 stimulation, receptor C-terminal cleavage occurs in its transmembrane region and allows the C-terminal intracellular product to translocate from the cytoplasm to the nucleus where it plays a crucial role in neuronal development. This chain is Tyrosine-protein kinase RYK, found in Homo sapiens (Human).